Reading from the N-terminus, the 397-residue chain is Phosphoglycerate kinase (397 aa).

Substrate contacts are provided by residues 21 to 23 (DFN), R37, 60 to 63 (HLGR), R119, and R152. ATP contacts are provided by residues K203, G294, E325, and 354-357 (GGDS).

It belongs to the phosphoglycerate kinase family. Monomer.

Its subcellular location is the cytoplasm. The catalysed reaction is (2R)-3-phosphoglycerate + ATP = (2R)-3-phospho-glyceroyl phosphate + ADP. It functions in the pathway carbohydrate degradation; glycolysis; pyruvate from D-glyceraldehyde 3-phosphate: step 2/5. The sequence is that of Phosphoglycerate kinase from Chlorobium phaeobacteroides (strain DSM 266 / SMG 266 / 2430).